The sequence spans 381 residues: Dual-specificity RNA methyltransferase RlmN (381 aa).

Glu95 functions as the Proton acceptor in the catalytic mechanism. A Radical SAM core domain is found at 101–339 (DGRRGTLCVS…MTTVRTTRGD (239 aa)). A disulfide bond links Cys108 and Cys345. The [4Fe-4S] cluster site is built by Cys115, Cys119, and Cys122. S-adenosyl-L-methionine contacts are provided by residues 169 to 170 (GE), Ser201, 223 to 225 (SLH), and Asn302. Cys345 (S-methylcysteine intermediate) is an active-site residue.

It belongs to the radical SAM superfamily. RlmN family. Requires [4Fe-4S] cluster as cofactor.

Its subcellular location is the cytoplasm. The catalysed reaction is adenosine(2503) in 23S rRNA + 2 reduced [2Fe-2S]-[ferredoxin] + 2 S-adenosyl-L-methionine = 2-methyladenosine(2503) in 23S rRNA + 5'-deoxyadenosine + L-methionine + 2 oxidized [2Fe-2S]-[ferredoxin] + S-adenosyl-L-homocysteine. The enzyme catalyses adenosine(37) in tRNA + 2 reduced [2Fe-2S]-[ferredoxin] + 2 S-adenosyl-L-methionine = 2-methyladenosine(37) in tRNA + 5'-deoxyadenosine + L-methionine + 2 oxidized [2Fe-2S]-[ferredoxin] + S-adenosyl-L-homocysteine. In terms of biological role, specifically methylates position 2 of adenine 2503 in 23S rRNA and position 2 of adenine 37 in tRNAs. m2A2503 modification seems to play a crucial role in the proofreading step occurring at the peptidyl transferase center and thus would serve to optimize ribosomal fidelity. This is Dual-specificity RNA methyltransferase RlmN from Alcanivorax borkumensis (strain ATCC 700651 / DSM 11573 / NCIMB 13689 / SK2).